Here is a 118-residue protein sequence, read N- to C-terminus: NADH-ubiquinone oxidoreductase chain 3 (118 aa).

3 consecutive transmembrane segments (helical) span residues 5–25, 62–82, and 87–107; these read YIYI…LIFL, LIAI…PWSI, and GSFF…VGFI.

Belongs to the complex I subunit 3 family.

The protein localises to the mitochondrion membrane. The catalysed reaction is a ubiquinone + NADH + 5 H(+)(in) = a ubiquinol + NAD(+) + 4 H(+)(out). In terms of biological role, core subunit of the mitochondrial membrane respiratory chain NADH dehydrogenase (Complex I) that is believed to belong to the minimal assembly required for catalysis. Complex I functions in the transfer of electrons from NADH to the respiratory chain. The immediate electron acceptor for the enzyme is believed to be ubiquinone. The sequence is that of NADH-ubiquinone oxidoreductase chain 3 (ND3) from Acanthamoeba castellanii (Amoeba).